The following is a 405-amino-acid chain: Tyrosine--tRNA ligase (405 aa).

An L-tyrosine-binding site is contributed by Tyr-35. Positions 40–49 match the 'HIGH' region motif; that stretch reads TTSSSLHIGH. 2 residues coordinate L-tyrosine: Tyr-166 and Gln-170. Residues 226-230 carry the 'KMSKS' region motif; it reads KMGKS. Residue Lys-229 coordinates ATP. The S4 RNA-binding domain occupies 340 to 404; sequence ILLIDLMLDS…VGKKKFLRIV (65 aa).

Belongs to the class-I aminoacyl-tRNA synthetase family. TyrS type 1 subfamily. Homodimer.

The protein localises to the cytoplasm. The catalysed reaction is tRNA(Tyr) + L-tyrosine + ATP = L-tyrosyl-tRNA(Tyr) + AMP + diphosphate + H(+). Catalyzes the attachment of tyrosine to tRNA(Tyr) in a two-step reaction: tyrosine is first activated by ATP to form Tyr-AMP and then transferred to the acceptor end of tRNA(Tyr). This chain is Tyrosine--tRNA ligase, found in Borrelia garinii subsp. bavariensis (strain ATCC BAA-2496 / DSM 23469 / PBi) (Borreliella bavariensis).